The chain runs to 489 residues: Blue-light-activated histidine kinase (489 aa).

Residues 19–93 (ATDPFRAAVE…AIKSAIAAEK (75 aa)) form the PAS domain. Cys-69 carries the S-4a-FMN cysteine modification. 2 consecutive PAC domains span residues 93-147 (KPID…ELEK) and 232-281 (YSIE…NKAL). An HWE histidine kinase domain region spans residues 259–341 (NPLVLGIVQD…LLKENWAGAT (83 aa)). His-288 carries the post-translational modification Phosphohistidine; by autocatalysis.

FMN binds covalently to cysteine after exposure to blue light and this bond is spontaneously broken in the dark.

It carries out the reaction ATP + protein L-histidine = ADP + protein N-phospho-L-histidine.. Its function is as follows. Photosensitive kinase that is involved in increased bacterial virulence upon exposure to light. Once ejected from an infected animal host, sunlight acts as an environmental signal that increases the virulence of the bacterium, preparing it for infection of the next host. This photoreceptor protein is directly related to the bacterium's survival and replication within host macrophages, as it is required for optimal replication of bacteria inside macrophages. The chain is Blue-light-activated histidine kinase from Brucella abortus (strain 2308).